We begin with the raw amino-acid sequence, 341 residues long: Queuosine 5'-phosphate N-glycosylase/hydrolase (341 aa).

An N-acetylmethionine modification is found at M1. Queuine is bound by residues H53, F237, D239, D314, Y315, and D319. D239 functions as the Nucleophile or transition state stabilizer in the catalytic mechanism.

It belongs to the QNG1 protein family.

It carries out the reaction queuosine 5'-phosphate + H2O = queuine + D-ribose 5-phosphate. Functionally, catalyzes the hydrolysis of queuosine 5'-phosphate, releasing the nucleobase queuine (q). Is required for salvage of queuine from exogenous queuosine (Q) that is imported and then converted to queuosine 5'-phosphate intracellularly. This is Queuosine 5'-phosphate N-glycosylase/hydrolase from Bos taurus (Bovine).